Consider the following 1062-residue polypeptide: Exportin-T (1062 aa).

Belongs to the exportin family.

Its subcellular location is the nucleus. The protein resides in the cytoplasm. Its function is as follows. tRNA nucleus export receptor which facilitates tRNA translocation across the nuclear pore complex. Involved in pre-tRNA splicing, probably by affecting the interaction of pre-tRNA with splicing endonuclease. This Vanderwaltozyma polyspora (strain ATCC 22028 / DSM 70294 / BCRC 21397 / CBS 2163 / NBRC 10782 / NRRL Y-8283 / UCD 57-17) (Kluyveromyces polysporus) protein is Exportin-T (LOS1).